The following is an 89-amino-acid chain: Large ribosomal subunit protein bL28 (89 aa).

Belongs to the bacterial ribosomal protein bL28 family.

The polypeptide is Large ribosomal subunit protein bL28 (Chlamydia trachomatis serovar L2 (strain ATCC VR-902B / DSM 19102 / 434/Bu)).